The chain runs to 161 residues: Peroxynitrite isomerase 2 (161 aa).

A GXWXGXG motif is present at residues 17–23 (GTWAGQG). Histidine 152 contacts heme b.

The protein belongs to the nitrobindin family. In terms of assembly, homodimer. Requires heme b as cofactor.

The catalysed reaction is peroxynitrite = nitrate. It functions in the pathway nitrogen metabolism. Heme-binding protein able to scavenge peroxynitrite and to protect free L-tyrosine against peroxynitrite-mediated nitration, by acting as a peroxynitrite isomerase that converts peroxynitrite to nitrate. Therefore, this protein likely plays a role in peroxynitrite sensing and in the detoxification of reactive nitrogen and oxygen species (RNS and ROS, respectively). Is able to bind nitric oxide (NO) in vitro, but may act as a sensor of peroxynitrite levels in vivo. The protein is Peroxynitrite isomerase 2 of Mycobacterium ulcerans (strain Agy99).